The primary structure comprises 182 residues: Large ribosomal subunit protein uL6 (182 aa).

Belongs to the universal ribosomal protein uL6 family. Part of the 50S ribosomal subunit.

Functionally, this protein binds to the 23S rRNA, and is important in its secondary structure. It is located near the subunit interface in the base of the L7/L12 stalk, and near the tRNA binding site of the peptidyltransferase center. This Caldicellulosiruptor saccharolyticus (strain ATCC 43494 / DSM 8903 / Tp8T 6331) protein is Large ribosomal subunit protein uL6.